A 262-amino-acid chain; its full sequence is Acyl-[acyl-carrier-protein]--UDP-N-acetylglucosamine O-acyltransferase (262 aa).

It belongs to the transferase hexapeptide repeat family. LpxA subfamily. Homotrimer.

The protein resides in the cytoplasm. The enzyme catalyses a (3R)-hydroxyacyl-[ACP] + UDP-N-acetyl-alpha-D-glucosamine = a UDP-3-O-[(3R)-3-hydroxyacyl]-N-acetyl-alpha-D-glucosamine + holo-[ACP]. Its pathway is glycolipid biosynthesis; lipid IV(A) biosynthesis; lipid IV(A) from (3R)-3-hydroxytetradecanoyl-[acyl-carrier-protein] and UDP-N-acetyl-alpha-D-glucosamine: step 1/6. Involved in the biosynthesis of lipid A, a phosphorylated glycolipid that anchors the lipopolysaccharide to the outer membrane of the cell. This Vibrio vulnificus (strain CMCP6) protein is Acyl-[acyl-carrier-protein]--UDP-N-acetylglucosamine O-acyltransferase.